The primary structure comprises 236 residues: Truncated formate dehydrogenase 2 (236 aa).

Residues 36 to 37, Asp-57, 104 to 108, Thr-130, Asp-156, and 185 to 188 each bind NAD(+); these read RI, PLHKD, and HISG.

This sequence belongs to the D-isomer specific 2-hydroxyacid dehydrogenase family. FDH subfamily.

This Saccharomyces cerevisiae (strain ATCC 204508 / S288c) (Baker's yeast) protein is Truncated formate dehydrogenase 2.